Consider the following 66-residue polypeptide: Large ribosomal subunit protein bL35 (66 aa).

Residues 1 to 23 (MPKMKTHRASAKRFKRTANGGLK) are disordered.

The protein belongs to the bacterial ribosomal protein bL35 family.

This Lactobacillus helveticus (strain DPC 4571) protein is Large ribosomal subunit protein bL35.